A 396-amino-acid chain; its full sequence is FAD-dependent monooxygenase phomE' (396 aa).

Position 3 (glutamate 3) interacts with FAD. Catalysis depends on residues arginine 158 and tyrosine 196. FAD contacts are provided by aspartate 277 and glycine 290.

Belongs to the paxM FAD-dependent monooxygenase family. Monomer. FAD serves as cofactor.

Its function is as follows. FAD-dependent monooxygenase; part of the gene cluster that mediates the biosynthesis of the phomopsins, a group of hexapeptide mycotoxins which infects lupins and causes lupinosis disease in livestock. The role of phomE' within the phomopsins biosynthesis pathway has still to be determined. The pathway starts with the processing of the precursor phomA by several endopeptidases including kexin proteases as well as the cluster-specific S41 family peptidase phomP1 and the oligopeptidase phomG to produce 10 identical copies of the hexapeptide Tyr-Val-Ile-Pro-Ile-Asp. After being excised from the precursor peptide, the core peptides are cyclized and modified post-translationally by enzymes encoded within the gene cluster. The timing and order of proteolysis of the phomA precursor and PTMs are still unknown. Two tyrosinase-like enzymes, phomQ1 and phomQ2, catalyze the chlorination and hydroxylation of Tyr, respectively. PhomYb, is proposed to be involved in the construction of the macrocyclic structure. The other 4 ustYa family proteins may be involved in PTMs that generate the unique structure of phomopsin A. PhomYa is required for the hydroxylation of C-beta of Tyr. PhomYc, phomYd, and phomYe are responsible for the biosynthesis of 2,3-dehydroisoleucine (dIle), 2,3-dehydroaspartic acid (dAsp), and 3,4-dehydroproline (dPro), respectively. While dIle formation by phomYc is indispensable for the installation of dAsp by phomYd, the order of the other PTMs have not been elucidated yet. Most of the biosynthetic enzymes likely have broad substrate specificity, and thus, there might be a metabolic grid from a precursor to phomopsin A. The enzyme(s) responsible for the biosynthesis of 3,4-dehydrovaline (dVal) have also not been identified yet. Finally, phomM acts as an S-adenosylmethionine-dependent alpha-N-methyltransferase that catalyzes two successive N-methylation reactions, converting N-desmethyl-phomopsin A to phomopsin A and phomopsin A further to an N,N-dimethylated congener called phomopsin E. This is FAD-dependent monooxygenase phomE' from Diaporthe leptostromiformis (Lupinosis disease fungus).